A 426-amino-acid chain; its full sequence is MGVLCFLASFWLALVGGAIADNAERYSANLSSHVEDFTPFPGTEFNFLGTTLQPPNLALPSNGSMHGYCPQQTKITTAFKYINTVISCTIFIVGMVGNATLLRIIYQNKCMRNGPNALIASLALGDLIYVVIDLPINVFKLLAGRWPFDHNDFGVFLCKLFPFLQKSSVGITVLNLCALSVDRYRAVASWSRVQGIGIPLITAIEIVSIWILSFILAIPEAIGFVMVPFEYKGEQHRTCMLNATTKFMEFYQDVKDWWLFGFYFCMPLVCTAIFYTLMTCEMLNRRNGSLRIALSEHLKQRREVAKTVFCLVVIFALCWFPLHLSRILKKTVYDEMDKNRCELLSFLLLMDYIGINLATMNSCINPIALYFVSKKFKNCFQSCLCCCCHQSKSLMTSVPMNGTSIQWKNQEQNHNTERSSHKDSMN.

The first 20 residues, 1–20, serve as a signal peptide directing secretion; the sequence is MGVLCFLASFWLALVGGAIA. Residues 21 to 80 lie on the Extracellular side of the membrane; the sequence is DNAERYSANLSSHVEDFTPFPGTEFNFLGTTLQPPNLALPSNGSMHGYCPQQTKITTAFK. Residues Asn29 and Asn62 are each glycosylated (N-linked (GlcNAc...) asparagine). The helical transmembrane segment at 81-102 threads the bilayer; that stretch reads YINTVISCTIFIVGMVGNATLL. The Cytoplasmic segment spans residues 103–112; the sequence is RIIYQNKCMR. Residues 113–132 form a helical membrane-spanning segment; that stretch reads NGPNALIASLALGDLIYVVI. Topologically, residues 133-159 are extracellular; the sequence is DLPINVFKLLAGRWPFDHNDFGVFLCK. Cys158 and Cys239 form a disulfide bridge. A helical transmembrane segment spans residues 160 to 181; that stretch reads LFPFLQKSSVGITVLNLCALSV. Topologically, residues 182–205 are cytoplasmic; the sequence is DRYRAVASWSRVQGIGIPLITAIE. Residues 206–229 traverse the membrane as a helical segment; that stretch reads IVSIWILSFILAIPEAIGFVMVPF. Residues 230-256 are Extracellular-facing; the sequence is EYKGEQHRTCMLNATTKFMEFYQDVKD. Residues 257 to 278 form a helical membrane-spanning segment; it reads WWLFGFYFCMPLVCTAIFYTLM. The Cytoplasmic segment spans residues 279 to 306; sequence TCEMLNRRNGSLRIALSEHLKQRREVAK. Residues 307–328 traverse the membrane as a helical segment; the sequence is TVFCLVVIFALCWFPLHLSRIL. The Extracellular segment spans residues 329-347; that stretch reads KKTVYDEMDKNRCELLSFL. A helical membrane pass occupies residues 348–372; that stretch reads LLMDYIGINLATMNSCINPIALYFV. The Cytoplasmic portion of the chain corresponds to 373–426; it reads SKKFKNCFQSCLCCCCHQSKSLMTSVPMNGTSIQWKNQEQNHNTERSSHKDSMN. Ser424 bears the Phosphoserine mark.

This sequence belongs to the G-protein coupled receptor 1 family. Endothelin receptor subfamily. EDNRA sub-subfamily. Interacts with HDAC7 and KAT5. In terms of tissue distribution, predominantly expressed in vascular smooth muscle cells of a variety of issues, bronchial smooth muscle cells, myocardium, and the pituitary gland.

Its subcellular location is the cell membrane. In terms of biological role, receptor for endothelin-1. Mediates its action by association with G proteins that activate a phosphatidylinositol-calcium second messenger system. The rank order of binding affinities for ET-A is: ET1 &gt; ET2 &gt;&gt; ET3. This chain is Endothelin-1 receptor, found in Rattus norvegicus (Rat).